The following is a 133-amino-acid chain: Ribonuclease P protein component (133 aa).

This sequence belongs to the RnpA family. Consists of a catalytic RNA component (M1 or rnpB) and a protein subunit.

It carries out the reaction Endonucleolytic cleavage of RNA, removing 5'-extranucleotides from tRNA precursor.. Its function is as follows. RNaseP catalyzes the removal of the 5'-leader sequence from pre-tRNA to produce the mature 5'-terminus. It can also cleave other RNA substrates such as 4.5S RNA. The protein component plays an auxiliary but essential role in vivo by binding to the 5'-leader sequence and broadening the substrate specificity of the ribozyme. This Pseudomonas entomophila (strain L48) protein is Ribonuclease P protein component.